The sequence spans 479 residues: UDP-glucose flavonoid 3-O-glucosyltransferase 6 (479 aa).

Catalysis depends on His17, which acts as the Proton acceptor. His17 is a binding site for an anthocyanidin. Asp121 (charge relay) is an active-site residue. Residues Thr143, Ala354, Gln356, His371, Trp374, Asn375, Ser376, and Glu379 each coordinate UDP-alpha-D-glucose. Position 394 (Ala394) interacts with an anthocyanidin. The UDP-alpha-D-glucose site is built by Glu395 and Gln396. The segment at 454–479 is disordered; sequence MSRKALEEDGSSYSSLGRFLDQIQTS.

It belongs to the UDP-glycosyltransferase family. As to expression, strongly expressed in achenes, with lower expression levels detected in receptacles.

The catalysed reaction is a flavonol + UDP-alpha-D-glucose = a flavonol 3-O-beta-D-glucoside + UDP + H(+). Functionally, broad spectrum multifunctional glucosyltransferase. Catalyzes the formation of flavonol 3-O-glucosides during fruit ripening. Accepted substrates include several flavonoids, hydroxycoumarins and beta-naphthols. Uses UDP-Glc as a sugar donor, but not UDP-Gal or UDP-GlcUA. May also be involved in detoxification of xenobiotics. This Fragaria ananassa (Strawberry) protein is UDP-glucose flavonoid 3-O-glucosyltransferase 6.